The chain runs to 968 residues: MPFTLGQRWISDTESELGLGTVVAMDARTVTLLFPSTGENRLYARSDSPVTRVMFNPGDTITSHEGWQLHIDEVKEENGLLVYVGTRLDTEETNVTLREVLLDSKLVFSKPQDRLFAGQIDRMDRFALRYRARKFQSEQYRMPYSGLRGQRTNLIPHQLNIAHDVGRRHAPRVLLADEVGLGKTIEAGMILHQQLLSGAAERVLIIVPETLQHQWLVEMLRRFNLRFALFDDERYTEAQHDAYNPFETEQLVICSLDFARRNKQRLEHLCDAEWDLLVVDEAHHLVWSTDAPSREYMAIEQLAERVPGVLLLTATPEQLGMESHFARLRLLDPNRFHDFEQFVEEQKNYRPVADAVAMLLAGNKLSNDELNRLGDLIGEQDIEPLLQAANSDRDDAQAARDELVSMLMDRHGTSRVLFRNTRNGVKGFPKRELHTVKLPLPTQYQTAIKVSGIMGARKSPEDRARDMLYPEQIYQEFEGDTGTWWNFDPRVEWLMGYLTSHRSQKVLVICAKATTALQLEQVLREREGIRAAVFHEGMSIIERDRAAAWFAEEDTGAQVLLCSEIGSEGRNFQFASNLVMFDLPFNPDLLEQRIGRLDRIGQAHDIQIHVPYLEKTAQSVLVRWYHEGLDAFEHTCPTGRAIYDSAYASLINYLAAPEETDGFDDLIKSCREQHEALKAQLEQGRDRLLEIHSNGGEKAQQLAQSIEEQDDDTNLIAFAMNLFDIVGINQDDRGDNLIVLTPSDHMLVPDFPGLPEDGCTITFERDVALSREDAQFITWEHPLIRNGLDLILSGDTGSSTISLLKNKALPVGTLLVELVYVVEAQAPKQLQLNRFLPPTPVRMLLDKNGNNLAAQVEFETFNRQLSAVNRHTGSKLVNAVQQDVHAILQLGETQIEKSARALIDNARREADEKLSGELSRLEALRAVNPNIRDDELAAIDSNRQQVLESLNQAGWRLDALRLIVVTHQ.

Residues D164 to N334 enclose the Helicase ATP-binding domain. D177–T184 is an ATP binding site. Residues D280–H283 carry the DEAH box motif. In terms of domain architecture, Helicase C-terminal spans R490 to R685.

This sequence belongs to the SNF2/RAD54 helicase family. RapA subfamily. As to quaternary structure, interacts with the RNAP. Has a higher affinity for the core RNAP than for the holoenzyme. Its ATPase activity is stimulated by binding to RNAP.

Functionally, transcription regulator that activates transcription by stimulating RNA polymerase (RNAP) recycling in case of stress conditions such as supercoiled DNA or high salt concentrations. Probably acts by releasing the RNAP, when it is trapped or immobilized on tightly supercoiled DNA. Does not activate transcription on linear DNA. Probably not involved in DNA repair. In Salmonella typhimurium (strain LT2 / SGSC1412 / ATCC 700720), this protein is RNA polymerase-associated protein RapA.